We begin with the raw amino-acid sequence, 350 residues long: Protein RecA (350 aa).

Residue 65–72 (GPESSGKT) coordinates ATP.

It belongs to the RecA family.

It is found in the cytoplasm. Its function is as follows. Can catalyze the hydrolysis of ATP in the presence of single-stranded DNA, the ATP-dependent uptake of single-stranded DNA by duplex DNA, and the ATP-dependent hybridization of homologous single-stranded DNAs. It interacts with LexA causing its activation and leading to its autocatalytic cleavage. This is Protein RecA from Clostridium tetani (strain Massachusetts / E88).